The following is a 313-amino-acid chain: tRNA dimethylallyltransferase (313 aa).

11–18 (GPTAAGKS) is an ATP binding site. Residue 13-18 (TAAGKS) coordinates substrate. Interaction with substrate tRNA stretches follow at residues 36–39 (DSAT), 160–164 (QRIQR), and 244–249 (RCVGYR).

This sequence belongs to the IPP transferase family. As to quaternary structure, monomer. Mg(2+) is required as a cofactor.

It carries out the reaction adenosine(37) in tRNA + dimethylallyl diphosphate = N(6)-dimethylallyladenosine(37) in tRNA + diphosphate. Catalyzes the transfer of a dimethylallyl group onto the adenine at position 37 in tRNAs that read codons beginning with uridine, leading to the formation of N6-(dimethylallyl)adenosine (i(6)A). The sequence is that of tRNA dimethylallyltransferase from Bordetella pertussis (strain Tohama I / ATCC BAA-589 / NCTC 13251).